Reading from the N-terminus, the 95-residue chain is Neutrophil antibiotic peptide NP-4 (95 aa).

The N-terminal stretch at 1–19 is a signal peptide; the sequence is MRTLALLAAILLVTLQAQA. A propeptide spanning residues 20-62 is cleaved from the precursor; that stretch reads ELHSGMADDGVDQQQPRAQDLDVAVYIKQDETSPLEVLGAKAG. Cystine bridges form between cysteine 65-cysteine 93, cysteine 67-cysteine 82, and cysteine 72-cysteine 92.

Belongs to the alpha-defensin family.

It is found in the secreted. Its function is as follows. Microbicidal activity. This chain is Neutrophil antibiotic peptide NP-4, found in Oryctolagus cuniculus (Rabbit).